A 219-amino-acid polypeptide reads, in one-letter code: Transmembrane emp24 domain-containing protein 10 (219 aa).

The signal sequence occupies residues 1–31 (MSGLSGPLSWPGPLLSALLFLFLLGPSSVLG). Residues 1 to 142 (MSGLSGPLSW…KNYEEIAKVE (142 aa)) are required for interaction with STX17. The Lumenal portion of the chain corresponds to 32–185 (ISFHLPVNSR…RDTNESTNTR (154 aa)). The region spanning 41–193 (RKCLREEIHK…TRVLYFSIFS (153 aa)) is the GOLD domain. The required for TMED10 and TMED2 cis-Golgi network localization stretch occupies residues 147–178 (LEVELRRLEDLSESIVNDFAYMKKREEEMRDT). Dimethylated arginine occurs at positions 171 and 176. The N-linked (GlcNAc...) asparagine glycan is linked to Asn179. A helical membrane pass occupies residues 186–206 (VLYFSIFSMFCLIGLATWQVF). Residues 204 to 219 (QVFYLRRFFKAKKLIE) form an interaction with COPG1 region. At 207–219 (YLRRFFKAKKLIE) the chain is on the cytoplasmic side. Residues 207 to 219 (YLRRFFKAKKLIE) form an interaction with ARF1 and IL1B region. The COPII vesicle coat-binding motif lies at 211–212 (FF). The short motif at 211-219 (FFKAKKLIE) is the COPI vesicle coat-binding element.

It belongs to the EMP24/GP25L family. As to quaternary structure, predominantly dimeric and to a lesser extent monomeric in the ER. Monomer and dimer in ERGIC and cis-Golgi network. Forms homooligomer (via GOLD domain); the assembly is promoted by direct binding with leaderless cargos and may form a protein channel that facilitates cargo entry into the ERGIC. Forms heterooligomeric complexes with other members of the p24 family such as TMED2, TMED7 and TMED9. Interacts (via GOLD domain) with TMED2 (via GOLD domain); the complex is required for export of TMED10 from the ER to the cis-Golgi network; the complex is proposed to be involved in cis-Golgi network dynamics and / or biogenesis. Associates with the COPI vesicle coat subunits (coatomer). Tetramerization of the cytoplasmic domain at the Golgi membrane in vitro; the complex is proposed to interact with COPI coatomer and induce budding of the vesicles. Interacts with COPG1; the interaction involves TMED10 homodimer. Interacts with ARF1 (GDP-bound); the interaction probably involves a TMED10 oligomer. Interacts with SEC23A, SEC24B, SEC24C and SEC24D components of the coat protein complex II/COPII, indicative of an association of TMED10 with the COPII vesicle coat. Interacts with CD59. Interacts with MPPE1/PGAP5; the complex might recruit and sort GPI-anchored proteins to the ER-exit site, or the interaction might lead to recycling of PGAP5 between the ER and the Golgi. Interacts with F2LR1/PAR2. Interacts with KDELR2/ERD2; the interaction is disrupted by KDELR2 ligand. Found in a complex composed at least of SURF4, TMED2 and TMED10. Associates with the presenilin-dependent gamma-secretase complex. Interacts with STX17; the interaction is direct. Interacts with IL-1; the interaction is direct. Interacts with RAB21 (active GTP-bound form); the interaction is indirect and regulates TMED10 abundance and localization at the Golgi. Ubiquitous.

It localises to the endoplasmic reticulum membrane. Its subcellular location is the endoplasmic reticulum-Golgi intermediate compartment membrane. The protein localises to the golgi apparatus membrane. It is found in the golgi apparatus. The protein resides in the cis-Golgi network membrane. It localises to the trans-Golgi network membrane. Its subcellular location is the cytoplasmic vesicle. The protein localises to the secretory vesicle membrane. It is found in the cell membrane. The protein resides in the melanosome. In terms of biological role, cargo receptor involved in protein vesicular trafficking and quality control in the endoplasmic reticulum (ER) and Golgi. The p24 protein family is a group of transmembrane proteins that bind coat protein complex I/COPI and coat protein complex II/COPII involved in vesicular trafficking between the membranes. Acts at the lumenal side for incorporation of secretory cargo molecules into transport vesicles and involved in vesicle coat formation at the cytoplasmic side. Mainly functions in the early secretory pathway and cycles between the ER, ER-Golgi intermediate compartment (ERGIC) and Golgi, mediating cargo transport through COPI and COPII-coated vesicles. In COPII vesicle-mediated anterograde transport, involved in the transport of GPI-anchored proteins by acting together with TMED2 as their cargo receptor; the function specifically implies SEC24C and SEC24D of the COPII vesicle coat and lipid raft-like microdomains of the ER. Recognizes GPI anchors structural remodeled in the ER by the GPI inositol-deacylase/PGAP1 and the metallophosphoesterase MPPE1/PGAP5. In COPI vesicle-mediated retrograde transport, involved in the biogenesis of COPI vesicles and vesicle coat recruitment. Involved in trafficking of amyloid beta A4 protein and soluble APP-beta release (independent from the modulation of gamma-secretase activity). Involved in the KDELR2-mediated retrograde transport of the toxin A subunit (CTX-A-K63)together with COPI and the COOH terminus of KDELR2. On Golgi membranes, acts as a primary receptor for ARF1-GDP, a GTP-binding protein involved in COPI-vesicle formation. Increases coatomer-dependent GTPase-activating activity of ARFGAP2 which mediates the hydrolysis of ARF1-bound GTP and therefore modulates protein trafficking from the Golgi apparatus. Involved in the exocytic trafficking of G protein-coupled receptors F2LR1/PAR2 (trypsin and tryspin-like enzyme receptor), OPRM1 (opioid receptor) and P2RY4 (UTD and UDP receptor) from the Golgi to the plasma membrane, thus contributing to receptor resensitization. In addition to its cargo receptor activity, may also act as a protein channel after oligomerization, facilitating the post-translational entry of leaderless cytoplasmic cargo into the ERGIC. Involved in the translocation into ERGIC, the vesicle entry and the secretion of leaderless cargos (lacking the secretion signal sequence), including the mature form of interleukin 1/IL-1 family members, the alpha-crystallin B chain HSPB5, the carbohydrate-binding proteins galectin-1/LGALS1 and galectin-3/LGALS3, the microtubule-associated protein Tau/MAPT, and the annexin A1/ANXA1; the translocation process is dependent on cargo protein unfolding and enhanced by chaperones HSP90AB1 and HSP90B1/GRP9. Could also associates with the presenilin-dependent gamma-secretase complex in order to regulate gamma-cleavages of the amyloid beta A4 protein to yield amyloid-beta 40/Abeta40. This chain is Transmembrane emp24 domain-containing protein 10, found in Rattus norvegicus (Rat).